The primary structure comprises 272 residues: MTFTEQLAAAWQRNDSLLCVGLDPDPHKLPLSLTGAGGAIFSFCREIVDATADLVCAFKPQIAYFHSQRAEDQLEQLIHYIHDAHPGIPVILDAKRGDIGSTAEHYALEAFERYKADAVTVSPYMGFDSMQPYLAYPERGVIVLCRTSNPGGSDVQFLQVDGKPLYQLVAEAARERWNTTGQMGLVVGATFPNEIARVRQIVGDMPLLIPGIGAQGGDIEATVKAGRTADGTGMMINSSRAILYASREKDFAAAARNVALQTRETINRYRHG.

Residue K95 is the Proton donor of the active site.

The protein belongs to the OMP decarboxylase family. Type 2 subfamily.

The enzyme catalyses orotidine 5'-phosphate + H(+) = UMP + CO2. Its pathway is pyrimidine metabolism; UMP biosynthesis via de novo pathway; UMP from orotate: step 2/2. This is Orotidine 5'-phosphate decarboxylase from Cupriavidus taiwanensis (strain DSM 17343 / BCRC 17206 / CCUG 44338 / CIP 107171 / LMG 19424 / R1) (Ralstonia taiwanensis (strain LMG 19424)).